The following is a 250-amino-acid chain: MFASDVPRLTGWAPERWPVAADWRPVVDRFLTSETGRALERFVRARLAGGAVIYPQQPLRALALTPLAQVKVVILGQDPYHGPGQAEGLAFSVAPGVRPPPSLCNIFREIARDPLLSPGNLIPHGDGSLVAWARQGVLLLNSCLTVEEGQPASHAGRGWEALTDEVVKAVASIDNPVVFLLWGAHAQAKQRLIAATARQGGRAAADHLVLTANHPSPLSARRPPLPFLGCGHFGLANAYLLQHGCAPIAW.

Catalysis depends on D78, which acts as the Proton acceptor.

It belongs to the uracil-DNA glycosylase (UDG) superfamily. UNG family.

Its subcellular location is the cytoplasm. It carries out the reaction Hydrolyzes single-stranded DNA or mismatched double-stranded DNA and polynucleotides, releasing free uracil.. Excises uracil residues from the DNA which can arise as a result of misincorporation of dUMP residues by DNA polymerase or due to deamination of cytosine. In Albidiferax ferrireducens (strain ATCC BAA-621 / DSM 15236 / T118) (Rhodoferax ferrireducens), this protein is Uracil-DNA glycosylase.